Consider the following 377-residue polypeptide: Caspase-4 (377 aa).

Residues 1–59 (MAEDKHNKNPLKMLESLGKELISGLLDDFVEKNVLKLEEEEKKKIYDAKLQDKARVLVD) are required for LPS-binding. The propeptide occupies 1 to 80 (MAEDKHNKNP…VFVQTFLNID (80 aa)). In terms of domain architecture, CARD spans 1–91 (MAEDKHNKNP…NSTSIKAPEE (91 aa)). Ser83 is modified (phosphoserine). Residues His210 and Cys258 contribute to the active site. The propeptide occupies 271 to 289 (SPPALADSFSQSSENLEED).

Belongs to the peptidase C14A family. Heterotetramer that consists of two anti-parallel arranged heterodimers, each one formed by a 20 kDa (Caspase-4 subunit p20) and a 10 kDa (Caspase-4 subunit p10) subunit. Upon direct LPS-binding, forms large homooligomers, resulting in its activation. These oligomers are often referred to as 'non-canonical inflammasomes'. In its precursor form, interacts with TMEM214; this interaction is required for association with the endoplasmic reticulum membrane. Interacts with CASP1. Interacts with NOD2. Interacts with Serpinb1a, Serpinb1b and Serpinb1c; these interactions regulate CASP4 activity. In terms of assembly, heterotetramer that consists of two anti-parallel arranged heterodimers, each one formed by a 20 kDa (Caspase-4 subunit p20) and a 10 kDa (Caspase-4 subunit p10) subunit. In terms of processing, in response to activation signals, undergoes autoproteolytic cleavage and activation.

Its subcellular location is the cytoplasm. The protein localises to the cytosol. The protein resides in the endoplasmic reticulum membrane. It is found in the mitochondrion. It localises to the inflammasome. Its subcellular location is the secreted. It carries out the reaction Strict requirement for Asp at the P1 position. It has a preferred cleavage sequence of Tyr-Val-Ala-Asp-|- but also cleaves at Asp-Glu-Val-Asp-|-.. Activated by homooligomerization induced by direct binding to cytosolic LPS, in a TLR4-independent manner. In addition to LPS, CASP4/CASP11 may also be activated by oxidized phospholipid 1-palmitoyl-2-arachidonoyl- sn-glycero-3-phosphorylcholine, an oxidized phospholipid (oxPAPC), in dendritic cells, promoting adaptive immunity. The role of oxPAPC is however unclear and another report suggests that oxPAPC competes with LPS-binding and inhibits the non-canonical inflammasome in macrophages. In terms of biological role, inflammatory caspase that acts as the effector of the non-canonical inflammasome by mediating lipopolysaccharide (LPS)-induced pyroptosis. Also indirectly activates the NLRP3 and NLRP6 inflammasomes. Acts as a thiol protease that cleaves a tetrapeptide after an Asp residue at position P1: catalyzes cleavage of CGAS, GSDMD and IL18. Effector of the non-canonical inflammasome independently of NLRP3 inflammasome and CASP1: the non-canonical inflammasome promotes pyroptosis through GSDMD cleavage without involving secretion of cytokine IL1B. In the non-canonical inflammasome, CASP4 is activated by direct binding to the lipid A moiety of LPS without the need of an upstream sensor. LPS-binding promotes CASP4 activation and CASP4-mediated cleavage of GSDMD and IL18, followed by IL18 secretion through the GSDMD pore, pyroptosis of infected cells and their extrusion into the gut lumen. Also indirectly promotes secretion of mature cytokines (IL1A and HMGB1) downstream of GSDMD-mediated pyroptosis via activation of the NLRP3 and NLRP6 inflammasomes. Involved in NLRP3-dependent CASP1 activation and IL1B secretion in response to non-canonical activators, such as UVB radiation or cholera enterotoxin. Involved in NLRP6 inflammasome-dependent activation in response to lipoteichoic acid (LTA), a cell-wall component of Gram-positive bacteria, which leads to CASP1 activation and IL1B secretion. Involved in LPS-induced IL6 secretion; this activity may not require caspase enzymatic activity. The non-canonical inflammasome is required for innate immunity to cytosolic, but not vacuolar, bacteria. Plays a crucial role in the restriction of S.typhimurium replication in colonic epithelial cells during infection. Pyroptosis limits bacterial replication, while cytokine secretion promotes the recruitment and activation of immune cells and triggers mucosal inflammation. May also act as an activator of adaptive immunity in dendritic cells, following activation by oxidized phospholipid 1-palmitoyl-2-arachidonoyl- sn-glycero-3-phosphorylcholine, an oxidized phospholipid (oxPAPC). Cleavage of GSDMD is not strictly dependent on the consensus cleavage site but depends on an exosite interface on CASP4 that recognizes and binds the Gasdermin-D, C-terminal (GSDMD-CT) part. Catalyzes cleavage and maturation of IL18; IL18 processing also depends of the exosite interface on CASP4. In contrast, it does not directly process IL1B. During non-canonical inflammasome activation, cuts CGAS and may play a role in the regulation of antiviral innate immune activation. This chain is Caspase-4 (CASP4), found in Bos taurus (Bovine).